Reading from the N-terminus, the 239-residue chain is Phosphoribosylaminoimidazole-succinocarboxamide synthase (239 aa).

It belongs to the SAICAR synthetase family.

It carries out the reaction 5-amino-1-(5-phospho-D-ribosyl)imidazole-4-carboxylate + L-aspartate + ATP = (2S)-2-[5-amino-1-(5-phospho-beta-D-ribosyl)imidazole-4-carboxamido]succinate + ADP + phosphate + 2 H(+). It participates in purine metabolism; IMP biosynthesis via de novo pathway; 5-amino-1-(5-phospho-D-ribosyl)imidazole-4-carboxamide from 5-amino-1-(5-phospho-D-ribosyl)imidazole-4-carboxylate: step 1/2. The chain is Phosphoribosylaminoimidazole-succinocarboxamide synthase from Bacillus cereus (strain G9842).